Here is a 318-residue protein sequence, read N- to C-terminus: Aspartate carbamoyltransferase catalytic subunit (318 aa).

Carbamoyl phosphate-binding residues include arginine 58 and threonine 59. Lysine 86 serves as a coordination point for L-aspartate. 3 residues coordinate carbamoyl phosphate: arginine 108, histidine 141, and glutamine 144. L-aspartate-binding residues include arginine 174 and arginine 226. Glycine 270 and proline 271 together coordinate carbamoyl phosphate.

The protein belongs to the aspartate/ornithine carbamoyltransferase superfamily. ATCase family. Heterododecamer (2C3:3R2) of six catalytic PyrB chains organized as two trimers (C3), and six regulatory PyrI chains organized as three dimers (R2).

The enzyme catalyses carbamoyl phosphate + L-aspartate = N-carbamoyl-L-aspartate + phosphate + H(+). The protein operates within pyrimidine metabolism; UMP biosynthesis via de novo pathway; (S)-dihydroorotate from bicarbonate: step 2/3. Functionally, catalyzes the condensation of carbamoyl phosphate and aspartate to form carbamoyl aspartate and inorganic phosphate, the committed step in the de novo pyrimidine nucleotide biosynthesis pathway. In Lactobacillus gasseri (strain ATCC 33323 / DSM 20243 / BCRC 14619 / CIP 102991 / JCM 1131 / KCTC 3163 / NCIMB 11718 / NCTC 13722 / AM63), this protein is Aspartate carbamoyltransferase catalytic subunit.